Consider the following 246-residue polypeptide: Putative carbonic anhydrase 3 (246 aa).

The Alpha-carbonic anhydrase domain occupies 3 to 244; that stretch reads GHWSYCDDDE…LNDRKIVHIV (242 aa). The Proton acceptor role is filled by His-61. Residues His-91, His-93, and His-116 each contribute to the Zn(2+) site. Residue 187-188 coordinates substrate; the sequence is TT.

The protein belongs to the alpha-carbonic anhydrase family. The cofactor is Zn(2+).

The enzyme catalyses hydrogencarbonate + H(+) = CO2 + H2O. Reversible hydration of carbon dioxide. The chain is Putative carbonic anhydrase 3 (cah-3) from Caenorhabditis elegans.